Here is a 392-residue protein sequence, read N- to C-terminus: Putative non-inhibitory serpin-10 (392 aa).

An RCL region spans residues 333-357 (GTTAVEATYSCCSPTYSGPESPKPR).

The protein belongs to the serpin family.

The protein is Putative non-inhibitory serpin-10 of Oryza sativa subsp. japonica (Rice).